Here is a 511-residue protein sequence, read N- to C-terminus: Peroxisomal N(1)-acetyl-spermine/spermidine oxidase (511 aa).

At Met-1 the chain carries N-acetylmethionine. FAD contacts are provided by residues Ala-24, Glu-45, Arg-53, and 69-70 (HW). His-72 and Val-194 together coordinate substrate. Residue Val-247 participates in FAD binding. Residue Asn-320 participates in substrate binding. FAD-binding positions include Glu-472 and 481-482 (TT). The Microbody targeting signal signature appears at 509–511 (PRL).

It belongs to the flavin monoamine oxidase family. In terms of assembly, monomer. Requires FAD as cofactor. As to expression, widely expressed. Not detected in spleen. Expressed at lower level in neoplastic tissues.

It is found in the peroxisome. Its subcellular location is the cytoplasm. It carries out the reaction N(1)-acetylspermine + O2 + H2O = 3-acetamidopropanal + spermidine + H2O2. It catalyses the reaction N(1)-acetylspermidine + O2 + H2O = 3-acetamidopropanal + putrescine + H2O2. The enzyme catalyses N(1),N(12)-diacetylspermine + O2 + H2O = 3-acetamidopropanal + N(1)-acetylspermidine + H2O2. It functions in the pathway amine and polyamine metabolism; spermine metabolism. In terms of biological role, flavoenzyme which catalyzes the oxidation of N(1)-acetylspermine to spermidine and is thus involved in the polyamine back-conversion. Can also oxidize N(1)-acetylspermidine to putrescine. Substrate specificity: N(1)-acetylspermine = N(1)-acetylspermidine &gt; N(1),N(12)-diacylspermine &gt;&gt; spermine. Does not oxidize spermidine. Plays an important role in the regulation of polyamine intracellular concentration and has the potential to act as a determinant of cellular sensitivity to the antitumor polyamine analogs. In Homo sapiens (Human), this protein is Peroxisomal N(1)-acetyl-spermine/spermidine oxidase (PAOX).